Consider the following 177-residue polypeptide: Large ribosomal subunit protein uL6 (177 aa).

Belongs to the universal ribosomal protein uL6 family. In terms of assembly, part of the 50S ribosomal subunit.

Its function is as follows. This protein binds to the 23S rRNA, and is important in its secondary structure. It is located near the subunit interface in the base of the L7/L12 stalk, and near the tRNA binding site of the peptidyltransferase center. This chain is Large ribosomal subunit protein uL6, found in Cronobacter sakazakii (strain ATCC BAA-894) (Enterobacter sakazakii).